The chain runs to 148 residues: UPF0756 membrane protein YeaL (148 aa).

The next 4 helical transmembrane spans lie at 14-34 (ALGFISHNTTVAVSILVLIIV), 51-71 (LTVGIIILTIGVMAPIASGTL), 86-106 (LVAIAVGVFVSWLGGRGVALM), and 121-141 (VLGVALFRGVPVGPLIAAGLV).

It belongs to the UPF0756 family.

The protein resides in the cell membrane. In Salmonella arizonae (strain ATCC BAA-731 / CDC346-86 / RSK2980), this protein is UPF0756 membrane protein YeaL.